The primary structure comprises 273 residues: Kit ligand (273 aa).

The N-terminal stretch at 1 to 25 (MKKTQTWILTCIYLQLLLFNPLVKT) is a signal peptide. Topologically, residues 26–214 (EGICRNRVTN…KNPPGDSSLH (189 aa)) are extracellular. 2 disulfides stabilise this stretch: Cys-29–Cys-114 and Cys-68–Cys-163. Asn-90 and Asn-118 each carry an N-linked (GlcNAc...) asparagine; partial glycan. Asn-145 carries N-linked (GlcNAc...) asparagine glycosylation. Ser-167 carries O-linked (GalNAc...) serine glycosylation. Thr-168 and Thr-180 each carry an O-linked (GalNAc...) threonine glycan. Asn-195 is a glycosylation site (N-linked (GlcNAc...) asparagine). A helical membrane pass occupies residues 215 to 237 (WAAMALPALFSLIIGFAFGALYW). Topologically, residues 238-273 (KKRQPSLTRAVENIQINEEDNEISMLQEKEREFQEV) are cytoplasmic.

Belongs to the SCF family. Homodimer, non-covalently linked. Heterotetramer with KIT, binding two KIT molecules; thereby mediates KIT dimerization and subsequent activation by autophosphorylation. In terms of processing, a soluble form (sKITLG) is produced by proteolytic processing of isoform 1 in the extracellular domain. Found in two differentially glycosylated forms, LMW-SCF and HMW-SCF. LMW-SCF is fully N-glycosylated at Asn-145, partially N-glycosylated at Asn-90, O-glycosylated at Ser-167, Thr-168 and Thr-180, and not glycosylated at Asn-97 or Asn-118. HMW-SCF is N-glycosylated at Asn-118, Asn-90 and Asn-145, O-glycosylated at Ser-167, Thr-168 and Thr-180, and not glycosylated at Asn-97. Post-translationally, a soluble form exists as a cleavage product of the extracellular domain.

Its subcellular location is the cell membrane. It localises to the cytoplasm. It is found in the cytoskeleton. The protein localises to the cell projection. The protein resides in the lamellipodium. Its subcellular location is the filopodium. It localises to the secreted. Its function is as follows. Ligand for the receptor-type protein-tyrosine kinase KIT. Plays an essential role in the regulation of cell survival and proliferation, hematopoiesis, stem cell maintenance, gametogenesis, mast cell development, migration and function, and in melanogenesis. KITLG/SCF binding can activate several signaling pathways. Promotes phosphorylation of PIK3R1, the regulatory subunit of phosphatidylinositol 3-kinase, and subsequent activation of the kinase AKT1. KITLG/SCF and KIT also transmit signals via GRB2 and activation of RAS, RAF1 and the MAP kinases MAPK1/ERK2 and/or MAPK3/ERK1. KITLG/SCF and KIT promote activation of STAT family members STAT1, STAT3 and STAT5. KITLG/SCF and KIT promote activation of PLCG1, leading to the production of the cellular signaling molecules diacylglycerol and inositol 1,4,5-trisphosphate. KITLG/SCF acts synergistically with other cytokines, probably interleukins. The protein is Kit ligand of Homo sapiens (Human).